Here is a 398-residue protein sequence, read N- to C-terminus: Argininosuccinate synthase (398 aa).

ATP-binding positions include 9-17 and alanine 36; that span reads AYSGGLDTS. L-citrulline contacts are provided by tyrosine 87 and serine 92. Glycine 117 lines the ATP pocket. The L-aspartate site is built by threonine 119, asparagine 123, and aspartate 124. Position 123 (asparagine 123) interacts with L-citrulline. Positions 127, 176, 185, 261, and 273 each coordinate L-citrulline.

Belongs to the argininosuccinate synthase family. Type 1 subfamily. As to quaternary structure, homotetramer.

It localises to the cytoplasm. It catalyses the reaction L-citrulline + L-aspartate + ATP = 2-(N(omega)-L-arginino)succinate + AMP + diphosphate + H(+). The protein operates within amino-acid biosynthesis; L-arginine biosynthesis; L-arginine from L-ornithine and carbamoyl phosphate: step 2/3. The protein is Argininosuccinate synthase of Desulfotalea psychrophila (strain LSv54 / DSM 12343).